Reading from the N-terminus, the 89-residue chain is Small ribosomal subunit protein uS14 (89 aa).

It belongs to the universal ribosomal protein uS14 family. In terms of assembly, part of the 30S ribosomal subunit. Contacts proteins S3 and S10.

Its function is as follows. Binds 16S rRNA, required for the assembly of 30S particles and may also be responsible for determining the conformation of the 16S rRNA at the A site. In Flavobacterium johnsoniae (strain ATCC 17061 / DSM 2064 / JCM 8514 / BCRC 14874 / CCUG 350202 / NBRC 14942 / NCIMB 11054 / UW101) (Cytophaga johnsonae), this protein is Small ribosomal subunit protein uS14.